Here is a 95-residue protein sequence, read N- to C-terminus: Aspartyl/glutamyl-tRNA(Asn/Gln) amidotransferase subunit C (95 aa).

Belongs to the GatC family. In terms of assembly, heterotrimer of A, B and C subunits.

It carries out the reaction L-glutamyl-tRNA(Gln) + L-glutamine + ATP + H2O = L-glutaminyl-tRNA(Gln) + L-glutamate + ADP + phosphate + H(+). The enzyme catalyses L-aspartyl-tRNA(Asn) + L-glutamine + ATP + H2O = L-asparaginyl-tRNA(Asn) + L-glutamate + ADP + phosphate + 2 H(+). Its function is as follows. Allows the formation of correctly charged Asn-tRNA(Asn) or Gln-tRNA(Gln) through the transamidation of misacylated Asp-tRNA(Asn) or Glu-tRNA(Gln) in organisms which lack either or both of asparaginyl-tRNA or glutaminyl-tRNA synthetases. The reaction takes place in the presence of glutamine and ATP through an activated phospho-Asp-tRNA(Asn) or phospho-Glu-tRNA(Gln). In Campylobacter lari (strain RM2100 / D67 / ATCC BAA-1060), this protein is Aspartyl/glutamyl-tRNA(Asn/Gln) amidotransferase subunit C.